Consider the following 208-residue polypeptide: uncharacterized protein (208 aa).

The signal sequence occupies residues 1–16 (MKFLLIACLAVPAILA). N-linked (GlcNAc...) asparagine glycosylation is present at Asn79.

This is an uncharacterized protein from Caenorhabditis elegans.